Reading from the N-terminus, the 208-residue chain is Ribosomal RNA large subunit methyltransferase E (208 aa).

S-adenosyl-L-methionine is bound by residues glycine 63, tryptophan 65, aspartate 83, aspartate 99, and aspartate 124. Lysine 164 acts as the Proton acceptor in catalysis.

Belongs to the class I-like SAM-binding methyltransferase superfamily. RNA methyltransferase RlmE family.

The protein localises to the cytoplasm. It carries out the reaction uridine(2552) in 23S rRNA + S-adenosyl-L-methionine = 2'-O-methyluridine(2552) in 23S rRNA + S-adenosyl-L-homocysteine + H(+). Its function is as follows. Specifically methylates the uridine in position 2552 of 23S rRNA at the 2'-O position of the ribose in the fully assembled 50S ribosomal subunit. The chain is Ribosomal RNA large subunit methyltransferase E from Salmonella arizonae (strain ATCC BAA-731 / CDC346-86 / RSK2980).